Here is a 428-residue protein sequence, read N- to C-terminus: Elongation factor 1-alpha (428 aa).

A tr-type G domain is found at 5-215 (KPHVNIVFIG…ALDQIPEPPK (211 aa)). Positions 14–21 (GHVDHGKS) are G1. 14–21 (GHVDHGKS) lines the GTP pocket. Residue Ser-21 participates in Mg(2+) binding. The segment at 68 to 72 (GITID) is G2. The G3 stretch occupies residues 89 to 92 (DAPG). GTP contacts are provided by residues 89–93 (DAPGH) and 144–147 (NKMD). The segment at 144–147 (NKMD) is G4. The tract at residues 181-183 (SAW) is G5.

It belongs to the TRAFAC class translation factor GTPase superfamily. Classic translation factor GTPase family. EF-Tu/EF-1A subfamily.

The protein resides in the cytoplasm. It catalyses the reaction GTP + H2O = GDP + phosphate + H(+). Functionally, GTP hydrolase that promotes the GTP-dependent binding of aminoacyl-tRNA to the A-site of ribosomes during protein biosynthesis. The polypeptide is Elongation factor 1-alpha (Thermococcus kodakarensis (strain ATCC BAA-918 / JCM 12380 / KOD1) (Pyrococcus kodakaraensis (strain KOD1))).